A 188-amino-acid chain; its full sequence is Peptidyl-tRNA hydrolase (188 aa).

Tyrosine 14 contributes to the tRNA binding site. Histidine 19 (proton acceptor) is an active-site residue. Residues tyrosine 64, asparagine 66, and asparagine 112 each coordinate tRNA.

This sequence belongs to the PTH family. As to quaternary structure, monomer.

It is found in the cytoplasm. It catalyses the reaction an N-acyl-L-alpha-aminoacyl-tRNA + H2O = an N-acyl-L-amino acid + a tRNA + H(+). In terms of biological role, hydrolyzes ribosome-free peptidyl-tRNAs (with 1 or more amino acids incorporated), which drop off the ribosome during protein synthesis, or as a result of ribosome stalling. Catalyzes the release of premature peptidyl moieties from peptidyl-tRNA molecules trapped in stalled 50S ribosomal subunits, and thus maintains levels of free tRNAs and 50S ribosomes. In Clostridium novyi (strain NT), this protein is Peptidyl-tRNA hydrolase.